Here is an 837-residue protein sequence, read N- to C-terminus: Protein translocase subunit SecA (837 aa).

Residues glutamine 87, 105-109 (GEGKT), and aspartate 494 each bind ATP. Positions 788–837 (HKESKSDLEYSDSENTETKKKPKRRSEPKVGRNDPCPCGSGKKYKKCCGK) are disordered. Zn(2+)-binding residues include cysteine 823, cysteine 825, cysteine 834, and cysteine 835.

It belongs to the SecA family. As to quaternary structure, monomer and homodimer. Part of the essential Sec protein translocation apparatus which comprises SecA, SecYEG and auxiliary proteins SecDF-YajC and YidC. Requires Zn(2+) as cofactor.

It is found in the cell inner membrane. The protein localises to the cytoplasm. It carries out the reaction ATP + H2O + cellular proteinSide 1 = ADP + phosphate + cellular proteinSide 2.. Functionally, part of the Sec protein translocase complex. Interacts with the SecYEG preprotein conducting channel. Has a central role in coupling the hydrolysis of ATP to the transfer of proteins into and across the cell membrane, serving as an ATP-driven molecular motor driving the stepwise translocation of polypeptide chains across the membrane. The chain is Protein translocase subunit SecA from Maridesulfovibrio salexigens (strain ATCC 14822 / DSM 2638 / NCIMB 8403 / VKM B-1763) (Desulfovibrio salexigens).